The sequence spans 446 residues: Tubulin beta-6 chain (446 aa).

The short motif at 1-4 is the MREI motif element; sequence MREI. Gln11, Glu69, Ser138, Gly142, Thr143, and Gly144 together coordinate GTP. Glu69 provides a ligand contact to Mg(2+). A Phosphoserine; by CDK1 modification is found at Ser172. Residues Asn204 and Asn226 each contribute to the GTP site. Residue Glu438 is modified to 5-glutamyl polyglutamate.

It belongs to the tubulin family. In terms of assembly, dimer of alpha and beta chains. A typical microtubule is a hollow water-filled tube with an outer diameter of 25 nm and an inner diameter of 15 nM. Alpha-beta heterodimers associate head-to-tail to form protofilaments running lengthwise along the microtubule wall with the beta-tubulin subunit facing the microtubule plus end conferring a structural polarity. Microtubules usually have 13 protofilaments but different protofilament numbers can be found in some organisms and specialized cells. Requires Mg(2+) as cofactor. Post-translationally, some glutamate residues at the C-terminus are polyglycylated, resulting in polyglycine chains on the gamma-carboxyl group. Glycylation is mainly limited to tubulin incorporated into axonemes (cilia and flagella) whereas glutamylation is prevalent in neuronal cells, centrioles, axonemes, and the mitotic spindle. Both modifications can coexist on the same protein on adjacent residues, and lowering polyglycylation levels increases polyglutamylation, and reciprocally. Cilia and flagella glycylation is required for their stability and maintenance. Flagella glycylation controls sperm motility. In terms of processing, some glutamate residues at the C-terminus are polyglutamylated, resulting in polyglutamate chains on the gamma-carboxyl group. Polyglutamylation plays a key role in microtubule severing by spastin (SPAST). SPAST preferentially recognizes and acts on microtubules decorated with short polyglutamate tails: severing activity by SPAST increases as the number of glutamates per tubulin rises from one to eight, but decreases beyond this glutamylation threshold. Glutamylation is also involved in cilia motility. Phosphorylated on Ser-172 by CDK1 during the cell cycle, from metaphase to telophase, but not in interphase. This phosphorylation inhibits tubulin incorporation into microtubules.

The protein resides in the cytoplasm. Its subcellular location is the cytoskeleton. Functionally, tubulin is the major constituent of microtubules, a cylinder consisting of laterally associated linear protofilaments composed of alpha- and beta-tubulin heterodimers. Microtubules grow by the addition of GTP-tubulin dimers to the microtubule end, where a stabilizing cap forms. Below the cap, tubulin dimers are in GDP-bound state, owing to GTPase activity of alpha-tubulin. This is Tubulin beta-6 chain (TUBB6) from Bos taurus (Bovine).